The sequence spans 38 residues: RCSPCFTTDQQMTKKCYDCCGGKGKGKCYGPQCICAPY.

Cystine bridges form between cysteine 2–cysteine 19, cysteine 5–cysteine 28, cysteine 16–cysteine 33, and cysteine 20–cysteine 35.

As to expression, expressed by the venom gland.

It localises to the secreted. Toxin with unknown function in healthy organisms. On glioma cells, interacts with chloride channels (probably ClC-3/CLCN3) and MMP2 at the surface of glioma cells. This complex is then internalized via caveolae, thus inhibiting the chloride channels necessary for cell shrinkage and tumor propagation. The sequence is that of Toxin Lqh 8/6 from Leiurus hebraeus (Hebrew deathstalker scorpion).